The primary structure comprises 450 residues: Phosphoglucosamine mutase (450 aa).

The Phosphoserine intermediate role is filled by Ser102. 4 residues coordinate Mg(2+): Ser102, Asp244, Asp246, and Asp248. Ser102 carries the phosphoserine modification.

The protein belongs to the phosphohexose mutase family. Mg(2+) is required as a cofactor. Activated by phosphorylation.

It catalyses the reaction alpha-D-glucosamine 1-phosphate = D-glucosamine 6-phosphate. Its function is as follows. Catalyzes the conversion of glucosamine-6-phosphate to glucosamine-1-phosphate. The sequence is that of Phosphoglucosamine mutase from Solidesulfovibrio magneticus (strain ATCC 700980 / DSM 13731 / RS-1) (Desulfovibrio magneticus).